The sequence spans 612 residues: Elongation factor 4 (612 aa).

In terms of domain architecture, tr-type G spans 11–193 (KHIRNFSIIA…RIVTDVPAPS (183 aa)). Residues 23–28 (DHGKST) and 140–143 (NKVD) each bind GTP.

This sequence belongs to the TRAFAC class translation factor GTPase superfamily. Classic translation factor GTPase family. LepA subfamily.

It is found in the cell membrane. The enzyme catalyses GTP + H2O = GDP + phosphate + H(+). In terms of biological role, required for accurate and efficient protein synthesis under certain stress conditions. May act as a fidelity factor of the translation reaction, by catalyzing a one-codon backward translocation of tRNAs on improperly translocated ribosomes. Back-translocation proceeds from a post-translocation (POST) complex to a pre-translocation (PRE) complex, thus giving elongation factor G a second chance to translocate the tRNAs correctly. Binds to ribosomes in a GTP-dependent manner. In Lacticaseibacillus paracasei (strain ATCC 334 / BCRC 17002 / CCUG 31169 / CIP 107868 / KCTC 3260 / NRRL B-441) (Lactobacillus paracasei), this protein is Elongation factor 4.